The primary structure comprises 528 residues: MSKVAIIDFGSQFTQLLARRIRDLNIYSEIFLPNVAFDLIKGVDAFILSGGPRSVPNSDGIPKIVHDILQFNEKTSIPVLGICYGLQILSNYFESDVVSNCNKEFGKTILNIIKNSKIIENIWESGDQACVWMSHADSVYNIPRGFEVIAYSVLNNSIAMVANEQRRIYGMQFHPEVYHTPDGINLLANFLDIAGCQKDWTVTSFIDDQQDAIKKQIGNKKVIAALSGGVDSSVAAALTYKAIGDQLHCVFIDNGLLRYNEVEKVKQLFINELKIPVTIVDKSAVFLNRLKSITDPERKRKIIGETFIEIFEEEANKLEGVEFLMQGTIYPDVVESGGSGSIAKESVVIKSHHNVGGLPKTMKFKLVEPLKYLFKDEVRILGRNLGISTEILMRHPFPGPGLAVRIIGEITEEKVKMLQAADDIYINLIKKYELYDVMWQAFVVLLPVKTVGVMGDRRTYGHACVLRAVNSHDGMTAESFPFCMDEETQWKFFKCIQEASNAIINSVNGINRVAYDITSKPPATIEWE.

A Glutamine amidotransferase type-1 domain is found at 3–199 (KVAIIDFGSQ…FLDIAGCQKD (197 aa)). Cys-83 (nucleophile) is an active-site residue. Catalysis depends on residues His-174 and Glu-176. The region spanning 200-394 (WTVTSFIDDQ…LGISTEILMR (195 aa)) is the GMPS ATP-PPase domain. ATP is bound at residue 227–233 (SGGVDSS).

Homodimer.

The catalysed reaction is XMP + L-glutamine + ATP + H2O = GMP + L-glutamate + AMP + diphosphate + 2 H(+). It participates in purine metabolism; GMP biosynthesis; GMP from XMP (L-Gln route): step 1/1. Its function is as follows. Catalyzes the synthesis of GMP from XMP. This is GMP synthase [glutamine-hydrolyzing] from Ehrlichia ruminantium (strain Welgevonden).